A 438-amino-acid polypeptide reads, in one-letter code: Aspartate--tRNA(Asp) ligase (438 aa).

L-aspartate is bound at residue Glu-170. Positions 192-195 are aspartate; it reads QLYK. Position 214 (Arg-214) interacts with L-aspartate. Residues 214-216, 222-224, and Glu-361 each bind ATP; these read RAE and RHL. Mg(2+) is bound by residues Glu-361 and Ser-364. Residues Ser-364 and Arg-368 each coordinate L-aspartate. ATP is bound at residue 409 to 412; that stretch reads GAER.

It belongs to the class-II aminoacyl-tRNA synthetase family. Type 2 subfamily. Homodimer. Requires Mg(2+) as cofactor.

The protein localises to the cytoplasm. The catalysed reaction is tRNA(Asp) + L-aspartate + ATP = L-aspartyl-tRNA(Asp) + AMP + diphosphate. In terms of biological role, catalyzes the attachment of L-aspartate to tRNA(Asp) in a two-step reaction: L-aspartate is first activated by ATP to form Asp-AMP and then transferred to the acceptor end of tRNA(Asp). This chain is Aspartate--tRNA(Asp) ligase, found in Pyrococcus abyssi (strain GE5 / Orsay).